An 89-amino-acid polypeptide reads, in one-letter code: Small ribosomal subunit protein uS14 (89 aa).

Belongs to the universal ribosomal protein uS14 family. Part of the 30S ribosomal subunit. Contacts proteins S3 and S10.

Its function is as follows. Binds 16S rRNA, required for the assembly of 30S particles and may also be responsible for determining the conformation of the 16S rRNA at the A site. This chain is Small ribosomal subunit protein uS14, found in Parabacteroides distasonis (strain ATCC 8503 / DSM 20701 / CIP 104284 / JCM 5825 / NCTC 11152).